Here is a 311-residue protein sequence, read N- to C-terminus: Putative ankyrin repeat protein RF_0923 (311 aa).

ANK repeat units lie at residues 42–71 (IDNT…EQAI), 77–106 (NGNT…PQAI), 112–141 (NGNT…PQAI), 147–176 (NGNT…EQAI), and 182–213 (KGCT…AINH).

The protein is Putative ankyrin repeat protein RF_0923 of Rickettsia felis (strain ATCC VR-1525 / URRWXCal2) (Rickettsia azadi).